The chain runs to 162 residues: Nucleotide-binding protein Franean1_6074 (162 aa).

Belongs to the YajQ family.

Functionally, nucleotide-binding protein. This chain is Nucleotide-binding protein Franean1_6074, found in Parafrankia sp. (strain EAN1pec).